The primary structure comprises 122 residues: Large ribosomal subunit protein uL14 (122 aa).

This sequence belongs to the universal ribosomal protein uL14 family. In terms of assembly, part of the 50S ribosomal subunit. Forms a cluster with proteins L3 and L19. In the 70S ribosome, L14 and L19 interact and together make contacts with the 16S rRNA in bridges B5 and B8.

Its function is as follows. Binds to 23S rRNA. Forms part of two intersubunit bridges in the 70S ribosome. In Micrococcus luteus (Micrococcus lysodeikticus), this protein is Large ribosomal subunit protein uL14.